Consider the following 144-residue polypeptide: MRLLGLDVGSKTVGVAQSDPLGWTASSIEIIRINEAQGEFGLDRLGQIISEKKVSGIVIGLPKNMNNTEGPRVEASRNYGKMVSERFGLPIDYQDERLTSVEANRMLIEEADLSRAKRKKVIDSLAAQLILQNYLDKKGRLTNG.

The protein belongs to the YqgF nuclease family.

Its subcellular location is the cytoplasm. Functionally, could be a nuclease involved in processing of the 5'-end of pre-16S rRNA. This is Putative pre-16S rRNA nuclease from Oenococcus oeni (strain ATCC BAA-331 / PSU-1).